Reading from the N-terminus, the 396-residue chain is Tryptophan synthase beta chain (396 aa).

An N6-(pyridoxal phosphate)lysine modification is found at lysine 86.

The protein belongs to the TrpB family. In terms of assembly, tetramer of two alpha and two beta chains. Pyridoxal 5'-phosphate is required as a cofactor.

It catalyses the reaction (1S,2R)-1-C-(indol-3-yl)glycerol 3-phosphate + L-serine = D-glyceraldehyde 3-phosphate + L-tryptophan + H2O. Its pathway is amino-acid biosynthesis; L-tryptophan biosynthesis; L-tryptophan from chorismate: step 5/5. Functionally, the beta subunit is responsible for the synthesis of L-tryptophan from indole and L-serine. This Francisella philomiragia subsp. philomiragia (strain ATCC 25017 / CCUG 19701 / FSC 153 / O#319-036) protein is Tryptophan synthase beta chain.